The following is a 416-amino-acid chain: Transcription factor IIIB 50 kDa subunit (416 aa).

Residues 3–36 (NGSRCPDCGSSELVEDSHYSQSQLVCSDCGCVVT) form a TFIIB-type zinc finger. Residues Cys-7, Cys-10, Cys-28, and Cys-31 each contribute to the Zn(2+) site. 2 repeat units span residues 72–157 (DLRR…MQIV) and 173–249 (VKSY…SLAR). Residues 108 to 114 (AARLQKK) are interaction with target DNA. Residues 317-385 (AEVETKQQQP…TGDEDISDSE (69 aa)) form a disordered region. A Phosphoserine modification is found at Ser-350. Residues 354–360 (LLPPCML) form a required for the formation of a ternary complex with DNA and TBP; not required for interaction with TBP in the absence of DNA region. Residue Cys-358 is modified to Cysteine sulfenic acid (-SOH). A required for interaction with TBP and formation of a ternary complex with DNA and TBP region spans residues 362–416 (PPKRTHTMPPDSVVTGDEDISDSEIEQYLRTPQEVRDFERAQAASRAAMSVPNPP).

The protein belongs to the TFIIB family. In terms of assembly, component of TFIIIB complexes. The TFIIIB complex has two activities, alpha and beta. The TFIIIB-alpha activity complex is composed of TBP, BDP1, and a complex containing both BRF2 and at least four stably associated proteins; this complex inhibits the transcription by pol III via its phosphorylation by CK2; YY1 facilitates the TFIIIB-alpha complex formation. Interacts with TBP; this interaction promotes recruitment of BRF2 to TATA box-containing promoters. Interacts with TBP and the BURE sequence (GC-rich sequence downstream from the TATA box) to form a strong ternary complex which is joined by BDP1; this ternary complex stimulates pol III transcription. Forms a trimeric complex composed of TBP, BRF2 and mini-SNAPc complex (SNAP43, SNAP50, and the N-terminal third of SNAP190) on the promoter. Assembly of the TBP-BRF2 complex is stimulated by SNAP190. Interacts with MAF1 and SNAPC4. In terms of processing, in response to oxidative stress, Cys-358 is reversibly oxidized to cysteine sulfenic acid. Oxidation of Cys-358 impairs formation of a ternary complex with TBP and DNA and down-regulates expression of target genes in response to oxidative stress.

The protein localises to the nucleus. Functionally, general activator of RNA polymerase III transcription. Factor exclusively required for RNA polymerase III transcription of genes with promoter elements upstream of the initiation sites. Contributes to the regulation of gene expression; functions as activator in the absence of oxidative stress. Down-regulates expression of target genes in response to oxidative stress. Overexpression protects cells against apoptosis in response to oxidative stress. In Rattus norvegicus (Rat), this protein is Transcription factor IIIB 50 kDa subunit (Brf2).